The chain runs to 513 residues: Glycogen synthase (513 aa).

Residue Lys47 coordinates ADP-alpha-D-glucose.

The protein belongs to the glycosyltransferase 1 family. Bacterial/plant glycogen synthase subfamily.

The enzyme catalyses [(1-&gt;4)-alpha-D-glucosyl](n) + ADP-alpha-D-glucose = [(1-&gt;4)-alpha-D-glucosyl](n+1) + ADP + H(+). It functions in the pathway glycan biosynthesis; glycogen biosynthesis. Synthesizes alpha-1,4-glucan chains using ADP-glucose. The chain is Glycogen synthase from Pseudomonas aeruginosa (strain ATCC 15692 / DSM 22644 / CIP 104116 / JCM 14847 / LMG 12228 / 1C / PRS 101 / PAO1).